Here is a 433-residue protein sequence, read N- to C-terminus: N-lysine methyltransferase SMYD2 (433 aa).

Residues 7–241 form the SET domain; the sequence is GGLERFCSAG…PGDEVFTSYI (235 aa). An S-adenosyl-L-methionine-binding site is contributed by 17–19; the sequence is KGR. C52, C55, C65, C68, C74, C78, H86, and C90 together coordinate Zn(2+). The MYND-type zinc-finger motif lies at 52–90; that stretch reads CECCFARKEGLSKCGRCKQAFYCDVECQKEDWPLHKLEC. Residues H137, 206–207, and 258–260 each bind S-adenosyl-L-methionine; these read NH and YFF. Position 283 is a phosphoserine (S283).

This sequence belongs to the class V-like SAM-binding methyltransferase superfamily. As to quaternary structure, interacts (via MYND-type zinc finger) with EPB41L3. Interacts (via SET domain) with p53/TP53. Interacts with RB1 and HSP90AA1. Interacts with RNA polymerase II and HELZ. Interacts with SIN3A and HDAC1. Highly expressed in heart, skeletal muscle and brain tissue. During cardiac development, it is differentially expressed with highest expression in the neonatal heart while very low expression is detected at 12.5 dpc and adult. Specifically expressed in cardiomyocytes (at protein level).

Its subcellular location is the cytoplasm. The protein localises to the cytosol. The protein resides in the nucleus. The enzyme catalyses L-lysyl(4)-[histone H3] + 3 S-adenosyl-L-methionine = N(6),N(6),N(6)-trimethyl-L-lysyl(4)-[histone H3] + 3 S-adenosyl-L-homocysteine + 3 H(+). It catalyses the reaction L-lysyl-[protein] + S-adenosyl-L-methionine = N(6)-methyl-L-lysyl-[protein] + S-adenosyl-L-homocysteine + H(+). Functionally, protein-lysine N-methyltransferase that methylates both histones and non-histone proteins, including p53/TP53 and RB1. Specifically trimethylates histone H3 'Lys-4' (H3K4me3) in vivo. The activity requires interaction with HSP90alpha. Shows even higher methyltransferase activity on p53/TP53. Monomethylates 'Lys-370' of p53/TP53, leading to decreased DNA-binding activity and subsequent transcriptional regulation activity of p53/TP53. Monomethylates RB1 at 'Lys-860'. The chain is N-lysine methyltransferase SMYD2 (Smyd2) from Mus musculus (Mouse).